A 265-amino-acid chain; its full sequence is Orotidine 5'-phosphate decarboxylase (265 aa).

Substrate contacts are provided by residues Asp37, 59–61 (KTH), 91–100 (DRKFADIGNT), Tyr217, and Arg236. The Proton donor role is filled by Lys93.

This sequence belongs to the OMP decarboxylase family.

The enzyme catalyses orotidine 5'-phosphate + H(+) = UMP + CO2. It functions in the pathway pyrimidine metabolism; UMP biosynthesis via de novo pathway; UMP from orotate: step 2/2. This Saccharomycopsis fibuligera (Yeast) protein is Orotidine 5'-phosphate decarboxylase (URA3).